Here is a 127-residue protein sequence, read N- to C-terminus: Large ribosomal subunit protein bL19 (127 aa).

Belongs to the bacterial ribosomal protein bL19 family.

In terms of biological role, this protein is located at the 30S-50S ribosomal subunit interface and may play a role in the structure and function of the aminoacyl-tRNA binding site. The sequence is that of Large ribosomal subunit protein bL19 from Myxococcus xanthus (strain DK1622).